Consider the following 256-residue polypeptide: Kallikrein-15 (256 aa).

Residues 1 to 16 (MWLLLTLSFLLASTAA) form the signal peptide. The propeptide at 17-21 (QDGDK) is activation peptide. The Peptidase S1 domain occupies 22–254 (LLEGDECAPH…YLEWIRETMK (233 aa)). A disulfide bond links cysteine 47 and cysteine 63. Residues histidine 62 and aspartate 106 each act as charge relay system in the active site. Intrachain disulfides connect cysteine 138/cysteine 215, cysteine 180/cysteine 194, and cysteine 205/cysteine 230. Asparagine 171 carries an N-linked (GlcNAc...) asparagine glycan. The active-site Charge relay system is serine 209. Asparagine 232 carries N-linked (GlcNAc...) asparagine glycosylation.

The protein belongs to the peptidase S1 family. Kallikrein subfamily. In terms of tissue distribution, highest expression in the thyroid gland. Also expressed in the prostate, salivary, and adrenal glands and in the colon testis and kidney.

It is found in the secreted. Protease whose physiological substrate is not yet known. In Homo sapiens (Human), this protein is Kallikrein-15 (KLK15).